Here is a 368-residue protein sequence, read N- to C-terminus: Epoxyqueuosine reductase QueH (368 aa).

[4Fe-4S] cluster is bound by residues cysteine 6, cysteine 7, cysteine 87, and cysteine 90. The cysteines at positions 174 and 176 are disulfide-linked.

It belongs to the QueH family.

It carries out the reaction epoxyqueuosine(34) in tRNA + AH2 = queuosine(34) in tRNA + A + H2O. It functions in the pathway tRNA modification; tRNA-queuosine biosynthesis. In terms of biological role, catalyzes the conversion of epoxyqueuosine (oQ) to queuosine (Q), which is a hypermodified base found in the wobble positions of tRNA(Asp), tRNA(Asn), tRNA(His) and tRNA(Tyr). The chain is Epoxyqueuosine reductase QueH from Helicobacter pylori (strain ATCC 700392 / 26695) (Campylobacter pylori).